The chain runs to 199 residues: Recombination protein RecR (199 aa).

The segment at 60–75 (CARCHTFTEGEVCSTC) adopts a C4-type zinc-finger fold. The region spanning 83–178 (SRLAVVETPA…HVTRLARGVP (96 aa)) is the Toprim domain.

The protein belongs to the RecR family.

May play a role in DNA repair. It seems to be involved in an RecBC-independent recombinational process of DNA repair. It may act with RecF and RecO. This Paracidovorax citrulli (strain AAC00-1) (Acidovorax citrulli) protein is Recombination protein RecR.